The chain runs to 49 residues: Large ribosomal subunit protein bL33 (49 aa).

Belongs to the bacterial ribosomal protein bL33 family.

The chain is Large ribosomal subunit protein bL33 from Syntrophobacter fumaroxidans (strain DSM 10017 / MPOB).